Here is a 501-residue protein sequence, read N- to C-terminus: Putative antiporter subunit mnhD2 (501 aa).

14 consecutive transmembrane segments (helical) span residues 4–24 (SNLLILPLLLPAVCALGLVFI), 33–53 (IFSIGTMAVTTVVSLLLLIYV), 79–99 (LSLLLVTTSSFVVTLIMAYGF), 109–129 (YYLPSFILFLTVGVIGSFLTA), 131–151 (LFNIYVMFEVMLLASFVLITL), 162–182 (IIYVVLNILGSWLLLLGVGLL), 207–227 (IVIVSMVFLIAFSAKAALVLF), 245–265 (FAALMTKVGAYALIRFFTLIF), 274–294 (PLLVFLSCITMLIGAFGVLAY), 309–329 (IGFIILGLGTNTIAGVNGAIF), 334–354 (DIVVKTLLFFIIGSLVYITGL), 369–389 (FFGVAFVVMILAIGGVPPFSG), 409–429 (LALMIITSLIAMFSLFRIFFV), and 452–472 (NLIGVLVAMIIVMGLAAPLLF).

Belongs to the CPA3 antiporters (TC 2.A.63) subunit D family. In terms of assembly, may form a heterooligomeric complex that consists of seven subunits: mnhA2, mnhB2, mnhC2, mnhD2, mnhE2, mnhF2 and mnhG2.

It localises to the cell membrane. This Staphylococcus saprophyticus subsp. saprophyticus (strain ATCC 15305 / DSM 20229 / NCIMB 8711 / NCTC 7292 / S-41) protein is Putative antiporter subunit mnhD2 (mnhD2).